Consider the following 330-residue polypeptide: Beta-1,6-galactofuranosyltransferase WbbI (330 aa).

It localises to the cytoplasm. It participates in bacterial outer membrane biogenesis; lipopolysaccharide biosynthesis. Involved in the transfer of galactofuranose (Galf) onto an alpha-D-gluco-configured acceptor substrate to form a beta-1,6-linkage. It uses n-octyl alpha-D-glucopyranoside as an acceptor substrate for the addition of galactofuranose from the donor substrate UDP-galactofuranose. It is not able to use beta-D-glucopyranoside isomers. This is Beta-1,6-galactofuranosyltransferase WbbI (wbbI) from Escherichia coli (strain K12).